The sequence spans 560 residues: Dimethylaniline monooxygenase [N-oxide-forming] 4 (560 aa).

FAD is bound by residues 9–13, Glu32, and 40–41; these read GAGVS and LW. Residues 60-61 and 195-198 each bind NADP(+); these read TN and TGGD. A helical transmembrane segment spans residues 510 to 530; it reads LSHYLIAWGAPVLLVSLLLIY.

It belongs to the FMO family. It depends on FAD as a cofactor.

It is found in the microsome membrane. Its subcellular location is the endoplasmic reticulum membrane. It catalyses the reaction N,N-dimethylaniline + NADPH + O2 + H(+) = N,N-dimethylaniline N-oxide + NADP(+) + H2O. This protein is involved in the oxidative metabolism of a variety of xenobiotics such as drugs and pesticides. In Mus musculus (Mouse), this protein is Dimethylaniline monooxygenase [N-oxide-forming] 4 (Fmo4).